The following is a 72-amino-acid chain: Large ribosomal subunit protein eL40 (72 aa).

The protein belongs to the eukaryotic ribosomal protein eL40 family.

In Nicotiana tabacum (Common tobacco), this protein is Large ribosomal subunit protein eL40.